Here is a 644-residue protein sequence, read N- to C-terminus: Protein cueball (644 aa).

The signal sequence occupies residues 1 to 26 (MIRIRFGMDVLLVLLLATCLLTPAHG). Topologically, residues 27 to 531 (TPLEWDFAVT…VCLTPRVWTS (505 aa)) are extracellular. Asn82 and Asn108 each carry an N-linked (GlcNAc...) asparagine glycan. LDL-receptor class B repeat units lie at residues 121 to 166 (MNLF…DVCR), 167 to 211 (RKLY…DQLS), and 212 to 257 (DRLF…TNDA). 2 N-linked (GlcNAc...) asparagine glycosylation sites follow: Asn175 and Asn190. Positions 280–301 (TTTSKPEEEDSTDSTDFTDPEP) are disordered. Over residues 286–301 (EEEDSTDSTDFTDPEP) the composition is skewed to acidic residues. Residue Asn313 is glycosylated (N-linked (GlcNAc...) asparagine). EGF-like domains follow at residues 398 to 430 (EIRE…FTGE) and 433 to 471 (ELSV…ARCE). 5 disulfides stabilise this stretch: Cys402-Cys411, Cys406-Cys421, Cys437-Cys447, Cys441-Cys459, and Cys461-Cys470. Asn473 and Asn508 each carry an N-linked (GlcNAc...) asparagine glycan. A helical membrane pass occupies residues 532-552 (SVIIILVVGIVSSLLLVAVIV). The Cytoplasmic portion of the chain corresponds to 553-644 (HGIRRLYKPK…LIHNMEDDLY (92 aa)).

It belongs to the cueball family.

The protein localises to the cell membrane. Functionally, has a role in spermatogenesis and oogenesis. In Drosophila sechellia (Fruit fly), this protein is Protein cueball.